Reading from the N-terminus, the 880-residue chain is MSSNPQHLSGNEIRTRFLDFYAQRGHQILASASLVPEDPTVLLTIAGMLPFKPIFLGQRTPEFKRATTSQKCIRTNDIENVGRTKRHQTFFEMLGNFSFGDYFKEQAIAWGWEISTEVFGLPKERLVVSVFEEDDEAYAIWRDQIGVTEARIKRMGADDNFWVSGPTGPCGPCSEIYYDFHPERGDDNIDLEDDTRFIEFYNLVFMQYNRDASGNLTPLQNKNIDTGMGLERITQILQRVPNNYETDLIFPIIETAAKIAGIDYHSSDESTKVSLKVIGDHVRSVVHMIADEIRASNVGRGYVLRRLIRRVVRHGRLIGISGEFINQVAETAIALSESAYPNVRQRETVIKAELEREEANFLKTLDRGEKLLAEIIAEVKKQGKTVISGKDAFTLYDTHGFPLELTQEIAEENNLTVDVEGFQKQMEIQQQGGRGAHETIDLTVQGSLDKLAEHIHATEFIGYSQATATAKVEVLLVDGVVQEEAEAGTEVQIVLDETPFYAESGGQIGDRGYISGDGIVVQVEDVKKESDFFVHFGRIERGTLRVGDNVTAQIDRAGRRRAQANHTATHLLQAALKTIVDGGISQAGSLVSFDRLRFDFNSPRGLTVEEIQQVEEQINTWIAEAHSAKIELLPLAEAKARGAVAMFGEKYGDEVRVIDFPGVSMELCGGTHVSNTAEIGVFKIISEAGVASGVRRIEAVSGLAVLDYLNVRDKVVKDLSDRFKVKPEELPERITTLQNELRTTEKQLETLKGQLAIAKSDSLLQTADTCGDYKIIVAQLEGVDPESLKSAAERLLQKIGNGAVVLGSVPEADKVSLVAAFSPEVNKKGLQAGKFIGAIAKICGGGGGGRPNLAQAGGRDASKLPAALEQAQSELKSALG.

Residues H566, H570, C668, and H672 each coordinate Zn(2+).

This sequence belongs to the class-II aminoacyl-tRNA synthetase family. Zn(2+) is required as a cofactor.

It localises to the cytoplasm. The catalysed reaction is tRNA(Ala) + L-alanine + ATP = L-alanyl-tRNA(Ala) + AMP + diphosphate. In terms of biological role, catalyzes the attachment of alanine to tRNA(Ala) in a two-step reaction: alanine is first activated by ATP to form Ala-AMP and then transferred to the acceptor end of tRNA(Ala). Also edits incorrectly charged Ser-tRNA(Ala) and Gly-tRNA(Ala) via its editing domain. The protein is Alanine--tRNA ligase of Nostoc sp. (strain PCC 7120 / SAG 25.82 / UTEX 2576).